Here is a 763-residue protein sequence, read N- to C-terminus: Ethylene receptor 2 (763 aa).

Helical transmembrane passes span 58-78 (FLIAMAYFSIPLELLYFATCS), 86-106 (IVLQFGAFIVLCGLTHLITMF), and 115-135 (VVLALTVAKFLTALVSFATAI). C97 and H101 together coordinate Cu cation. The region spanning 190–339 (DRHTILYTTM…VVADQVAVAL (150 aa)) is the GAF domain. Positions 382-615 (AMYDGMRRPM…TIMLALQFQL (234 aa)) constitute a Histidine kinase domain. The Response regulatory domain maps to 641-760 (QVILVDSDDT…ALGDELYRVL (120 aa)). D692 bears the 4-aspartylphosphate mark.

The protein belongs to the ethylene receptor family. Cu cation serves as cofactor. In terms of tissue distribution, expressed in anthers and hulls.

The protein localises to the endoplasmic reticulum membrane. The enzyme catalyses ATP + protein L-histidine = ADP + protein N-phospho-L-histidine.. Functionally, ethylene receptor related to bacterial two-component regulators. Acts as a negative regulator of ethylene signaling. May delay the transition from the vegetative stage to the floral stage by up-regulating GI (GIGANTEA) and RCN1 and cause starch accumulation in stems by down-regulating the alpha-amylase AMY3D. This is Ethylene receptor 2 from Oryza sativa subsp. indica (Rice).